We begin with the raw amino-acid sequence, 470 residues long: Rhamnulokinase (470 aa).

An ATP-binding site is contributed by 12–16 (ASSGR). Substrate contacts are provided by residues Ala-80 and 237–239 (HDT). Catalysis depends on Asp-238, which acts as the Proton acceptor. Thr-259 serves as a coordination point for ATP. Asn-296 is a binding site for substrate. Gln-304 contacts ATP. An intrachain disulfide couples Cys-353 to Cys-370. Residue Gly-402 participates in ATP binding.

This sequence belongs to the rhamnulokinase family. It depends on Mg(2+) as a cofactor.

It catalyses the reaction L-rhamnulose + ATP = L-rhamnulose 1-phosphate + ADP + H(+). It participates in carbohydrate degradation; L-rhamnose degradation; glycerone phosphate from L-rhamnose: step 2/3. Its function is as follows. Involved in the catabolism of L-rhamnose (6-deoxy-L-mannose). Catalyzes the transfer of the gamma-phosphate group from ATP to the 1-hydroxyl group of L-rhamnulose to yield L-rhamnulose 1-phosphate. The protein is Rhamnulokinase of Oceanobacillus iheyensis (strain DSM 14371 / CIP 107618 / JCM 11309 / KCTC 3954 / HTE831).